A 610-amino-acid polypeptide reads, in one-letter code: Isocitrate dehydrogenase kinase/phosphatase (610 aa).

Residues 359 to 365 and Lys380 contribute to the ATP site; that span reads APGFKGT. Asp419 is an active-site residue.

Belongs to the AceK family.

Its subcellular location is the cytoplasm. It catalyses the reaction L-seryl-[isocitrate dehydrogenase] + ATP = O-phospho-L-seryl-[isocitrate dehydrogenase] + ADP + H(+). Its function is as follows. Bifunctional enzyme which can phosphorylate or dephosphorylate isocitrate dehydrogenase (IDH) on a specific serine residue. This is a regulatory mechanism which enables bacteria to bypass the Krebs cycle via the glyoxylate shunt in response to the source of carbon. When bacteria are grown on glucose, IDH is fully active and unphosphorylated, but when grown on acetate or ethanol, the activity of IDH declines drastically concomitant with its phosphorylation. The sequence is that of Isocitrate dehydrogenase kinase/phosphatase from Rhodopseudomonas palustris (strain TIE-1).